We begin with the raw amino-acid sequence, 243 residues long: Retrotransposon Gag-like protein 6 (243 aa).

A compositionally biased stretch (polar residues) spans 1-12; it reads MVQPRTSKTESP. A disordered region spans residues 1–22; it reads MVQPRTSKTESPASAPGASAQM. Residues 29–69 are a coiled coil; it reads LTSLRLTNSALRREASTLRAEKANLTNMLESVMAELTLLRT. Disordered regions lie at residues 84 to 105 and 218 to 243; these read SAITSNGTRPMTTPPTSLPEPF and TGSCPVHPASNGTNPAPALPSRGRNL. Residues 85-94 show a composition bias toward polar residues; it reads AITSNGTRPM.

This sequence belongs to the LDOC1 family. As to expression, widely expressed.

This is Retrotransposon Gag-like protein 6 from Mus musculus (Mouse).